Consider the following 585-residue polypeptide: Glycerol-3-phosphate acyltransferase 1 (585 aa).

The next 3 helical transmembrane spans lie at 126 to 146 (FFPYFMLVAFEGGSIIRAILL), 334 to 354 (TPLATLAMFIWLPIGFLLAVF), and 356 to 376 (ISVGVFLPYHVANFLASMSGV). Positions 403–408 (HRTLLD) match the HXXXXD motif motif.

This sequence belongs to the GPAT/DAPAT family. In terms of tissue distribution, highly expressed in developing siliques and flower buds. Weakly or not expressed in roots, seedlings and leaves.

Its subcellular location is the membrane. It is found in the mitochondrion. The catalysed reaction is sn-glycerol 3-phosphate + an acyl-CoA = a 1-acyl-sn-glycero-3-phosphate + CoA. It participates in phospholipid metabolism; CDP-diacylglycerol biosynthesis; CDP-diacylglycerol from sn-glycerol 3-phosphate: step 1/3. In terms of biological role, esterifies acyl-group from acyl-ACP to the sn-1 position of glycerol-3-phosphate, an essential step in glycerolipid biosynthesis. Involved in pollen development, by being required for tapetum differentiation and male fertility. In addition to the sporophytic effect, it also exerts a gametophytic effect on pollen performance. This chain is Glycerol-3-phosphate acyltransferase 1 (GPAT1), found in Arabidopsis thaliana (Mouse-ear cress).